We begin with the raw amino-acid sequence, 421 residues long: Gamma-glutamyl phosphate reductase (421 aa).

This sequence belongs to the gamma-glutamyl phosphate reductase family.

The protein localises to the cytoplasm. It carries out the reaction L-glutamate 5-semialdehyde + phosphate + NADP(+) = L-glutamyl 5-phosphate + NADPH + H(+). It participates in amino-acid biosynthesis; L-proline biosynthesis; L-glutamate 5-semialdehyde from L-glutamate: step 2/2. Functionally, catalyzes the NADPH-dependent reduction of L-glutamate 5-phosphate into L-glutamate 5-semialdehyde and phosphate. The product spontaneously undergoes cyclization to form 1-pyrroline-5-carboxylate. The chain is Gamma-glutamyl phosphate reductase from Erythrobacter litoralis (strain HTCC2594).